A 459-amino-acid polypeptide reads, in one-letter code: Chromosomal replication initiator protein DnaA (459 aa).

Positions 1-90 (MAVSLWQQCI…RPASKPAAPA (90 aa)) are domain I, interacts with DnaA modulators. The tract at residues 75-124 (RFDIGSRPASKPAAPAASTKSPVAPAAKSPSKPSFNSNEPAATANHRSNM) is disordered. The segment covering 80 to 108 (SRPASKPAAPAASTKSPVAPAAKSPSKPS) has biased composition (low complexity). Residues 91–122 (ASTKSPVAPAAKSPSKPSFNSNEPAATANHRS) form a domain II region. Polar residues predominate over residues 109 to 124 (FNSNEPAATANHRSNM). A domain III, AAA+ region region spans residues 123–339 (NMNPTYQFDN…GALNRVIANA (217 aa)). ATP contacts are provided by Gly167, Gly169, Lys170, and Thr171. The segment at 340 to 459 (NFTGRPITID…YANLIRTLSS (120 aa)) is domain IV, binds dsDNA.

Belongs to the DnaA family. Oligomerizes as a right-handed, spiral filament on DNA at oriC.

It localises to the cytoplasm. Plays an essential role in the initiation and regulation of chromosomal replication. ATP-DnaA binds to the origin of replication (oriC) to initiate formation of the DNA replication initiation complex once per cell cycle. Binds the DnaA box (a 9 base pair repeat at the origin) and separates the double-stranded (ds)DNA. Forms a right-handed helical filament on oriC DNA; dsDNA binds to the exterior of the filament while single-stranded (ss)DNA is stabiized in the filament's interior. The ATP-DnaA-oriC complex binds and stabilizes one strand of the AT-rich DNA unwinding element (DUE), permitting loading of DNA polymerase. After initiation quickly degrades to an ADP-DnaA complex that is not apt for DNA replication. Binds acidic phospholipids. This Shewanella loihica (strain ATCC BAA-1088 / PV-4) protein is Chromosomal replication initiator protein DnaA.